The primary structure comprises 537 residues: CTP synthase (537 aa).

Residues 1–268 (MGETKYIFVT…DSTILEKMGL (268 aa)) form an amidoligase domain region. Residue Ser-15 participates in CTP binding. Ser-15 is a binding site for UTP. 16 to 21 (SLGKGI) provides a ligand contact to ATP. L-glutamine is bound at residue Tyr-56. Asp-73 serves as a coordination point for ATP. Mg(2+) contacts are provided by Asp-73 and Glu-143. CTP contacts are provided by residues 150-152 (DIE), 189-194 (KTKPTQ), and Lys-225. Residues 189–194 (KTKPTQ) and Lys-225 contribute to the UTP site. Residues 296-537 (NIALVGKYDL…VKAAIENEKN (242 aa)) enclose the Glutamine amidotransferase type-1 domain. Gly-357 contributes to the L-glutamine binding site. The Nucleophile; for glutamine hydrolysis role is filled by Cys-384. Residues 385 to 388 (LGMQ), Glu-408, and Arg-465 contribute to the L-glutamine site. Active-site residues include His-510 and Glu-512.

This sequence belongs to the CTP synthase family. In terms of assembly, homotetramer.

The catalysed reaction is UTP + L-glutamine + ATP + H2O = CTP + L-glutamate + ADP + phosphate + 2 H(+). The enzyme catalyses L-glutamine + H2O = L-glutamate + NH4(+). It catalyses the reaction UTP + NH4(+) + ATP = CTP + ADP + phosphate + 2 H(+). It participates in pyrimidine metabolism; CTP biosynthesis via de novo pathway; CTP from UDP: step 2/2. Its activity is regulated as follows. Allosterically activated by GTP, when glutamine is the substrate; GTP has no effect on the reaction when ammonia is the substrate. The allosteric effector GTP functions by stabilizing the protein conformation that binds the tetrahedral intermediate(s) formed during glutamine hydrolysis. Inhibited by the product CTP, via allosteric rather than competitive inhibition. Catalyzes the ATP-dependent amination of UTP to CTP with either L-glutamine or ammonia as the source of nitrogen. Regulates intracellular CTP levels through interactions with the four ribonucleotide triphosphates. This chain is CTP synthase, found in Bacteroides thetaiotaomicron (strain ATCC 29148 / DSM 2079 / JCM 5827 / CCUG 10774 / NCTC 10582 / VPI-5482 / E50).